The primary structure comprises 393 residues: NAD(P)H-quinone oxidoreductase subunit H, chloroplastic (393 aa).

This sequence belongs to the complex I 49 kDa subunit family. As to quaternary structure, NDH is composed of at least 16 different subunits, 5 of which are encoded in the nucleus.

It is found in the plastid. Its subcellular location is the chloroplast thylakoid membrane. The catalysed reaction is a plastoquinone + NADH + (n+1) H(+)(in) = a plastoquinol + NAD(+) + n H(+)(out). It catalyses the reaction a plastoquinone + NADPH + (n+1) H(+)(in) = a plastoquinol + NADP(+) + n H(+)(out). NDH shuttles electrons from NAD(P)H:plastoquinone, via FMN and iron-sulfur (Fe-S) centers, to quinones in the photosynthetic chain and possibly in a chloroplast respiratory chain. The immediate electron acceptor for the enzyme in this species is believed to be plastoquinone. Couples the redox reaction to proton translocation, and thus conserves the redox energy in a proton gradient. The polypeptide is NAD(P)H-quinone oxidoreductase subunit H, chloroplastic (Solanum tuberosum (Potato)).